A 184-amino-acid polypeptide reads, in one-letter code: Inosine triphosphate pyrophosphatase (184 aa).

10–15 (TGNVKK) provides a ligand contact to ITP. Glutamate 37 lines the Mg(2+) pocket. ITP contacts are provided by residues lysine 49, 65-66 (DT), lysine 82, 141-144 (FGWD), lysine 164, and 169-170 (HR).

The protein belongs to the HAM1 NTPase family. Homodimer. It depends on Mg(2+) as a cofactor. Requires Mn(2+) as cofactor.

The protein localises to the cytoplasm. It catalyses the reaction ITP + H2O = IMP + diphosphate + H(+). It carries out the reaction dITP + H2O = dIMP + diphosphate + H(+). The enzyme catalyses XTP + H2O = XMP + diphosphate + H(+). Its function is as follows. Pyrophosphatase that hydrolyzes non-canonical purine nucleotides such as inosine triphosphate (ITP), deoxyinosine triphosphate (dITP) or xanthosine 5'-triphosphate (XTP) to their respective monophosphate derivatives. The enzyme does not distinguish between the deoxy- and ribose forms. Probably excludes non-canonical purines from RNA and DNA precursor pools, thus preventing their incorporation into RNA and DNA and avoiding chromosomal lesions. The sequence is that of Inosine triphosphate pyrophosphatase from Caenorhabditis elegans.